The primary structure comprises 166 residues: Large ribosomal subunit protein uL10 (166 aa).

It belongs to the universal ribosomal protein uL10 family. Part of the ribosomal stalk of the 50S ribosomal subunit. The N-terminus interacts with L11 and the large rRNA to form the base of the stalk. The C-terminus forms an elongated spine to which L12 dimers bind in a sequential fashion forming a multimeric L10(L12)X complex.

Functionally, forms part of the ribosomal stalk, playing a central role in the interaction of the ribosome with GTP-bound translation factors. This chain is Large ribosomal subunit protein uL10, found in Staphylococcus aureus (strain JH1).